Reading from the N-terminus, the 263-residue chain is 3-methyl-2-oxobutanoate hydroxymethyltransferase (263 aa).

Mg(2+) contacts are provided by Asp-45 and Asp-84. 3-methyl-2-oxobutanoate contacts are provided by residues 45–46, Asp-84, and Lys-112; that span reads DS. Glu-114 lines the Mg(2+) pocket. Glu-180 acts as the Proton acceptor in catalysis.

It belongs to the PanB family. In terms of assembly, homodecamer; pentamer of dimers. Mg(2+) is required as a cofactor.

It is found in the cytoplasm. It carries out the reaction 3-methyl-2-oxobutanoate + (6R)-5,10-methylene-5,6,7,8-tetrahydrofolate + H2O = 2-dehydropantoate + (6S)-5,6,7,8-tetrahydrofolate. It participates in cofactor biosynthesis; (R)-pantothenate biosynthesis; (R)-pantoate from 3-methyl-2-oxobutanoate: step 1/2. In terms of biological role, catalyzes the reversible reaction in which hydroxymethyl group from 5,10-methylenetetrahydrofolate is transferred onto alpha-ketoisovalerate to form ketopantoate. This chain is 3-methyl-2-oxobutanoate hydroxymethyltransferase, found in Citrobacter koseri (strain ATCC BAA-895 / CDC 4225-83 / SGSC4696).